The sequence spans 250 residues: Adenosylcobinamide-GDP ribazoletransferase (250 aa).

6 consecutive transmembrane segments (helical) span residues Ile-33–Ile-53, Ile-63–Gly-83, Leu-109–Thr-129, Leu-137–Ile-157, Phe-180–Phe-200, and Ile-203–Gly-223.

It belongs to the CobS family. The cofactor is Mg(2+).

It localises to the cell membrane. The enzyme catalyses alpha-ribazole + adenosylcob(III)inamide-GDP = adenosylcob(III)alamin + GMP + H(+). It catalyses the reaction alpha-ribazole 5'-phosphate + adenosylcob(III)inamide-GDP = adenosylcob(III)alamin 5'-phosphate + GMP + H(+). It participates in cofactor biosynthesis; adenosylcobalamin biosynthesis; adenosylcobalamin from cob(II)yrinate a,c-diamide: step 7/7. Joins adenosylcobinamide-GDP and alpha-ribazole to generate adenosylcobalamin (Ado-cobalamin). Also synthesizes adenosylcobalamin 5'-phosphate from adenosylcobinamide-GDP and alpha-ribazole 5'-phosphate. This Thermoanaerobacter pseudethanolicus (strain ATCC 33223 / 39E) (Clostridium thermohydrosulfuricum) protein is Adenosylcobinamide-GDP ribazoletransferase.